Here is a 273-residue protein sequence, read N- to C-terminus: Large ribosomal subunit protein uL2 (273 aa).

Residues 224–260 (AMNPVDHPHGGGEGKTSGGRHPVTPWGKKTKGKKTRK) form a disordered region. Basic residues predominate over residues 251–260 (KKTKGKKTRK).

The protein belongs to the universal ribosomal protein uL2 family. In terms of assembly, part of the 50S ribosomal subunit. Forms a bridge to the 30S subunit in the 70S ribosome.

Functionally, one of the primary rRNA binding proteins. Required for association of the 30S and 50S subunits to form the 70S ribosome, for tRNA binding and peptide bond formation. It has been suggested to have peptidyltransferase activity; this is somewhat controversial. Makes several contacts with the 16S rRNA in the 70S ribosome. The polypeptide is Large ribosomal subunit protein uL2 (Orientia tsutsugamushi (strain Ikeda) (Rickettsia tsutsugamushi)).